We begin with the raw amino-acid sequence, 423 residues long: MLDIKKIRADFDGIAAKLATRGVEKEKLEKLHDLDIKRRELIVKSEALKAERNSVSDEISQVKRAKGDASTQIAAMQKVSAEIKAIDAELAEIEENLNEIIIMLPNLPHESTPIGADEDDNVEVRRVGQTPTFNFEPKAHWDLGEDLGILDWERGGKVTGSRFLFYKGAGARLERALYNFMLDEHGKEGYTEMITPYMVNQESMFGTGQYPKFKEDTFELKDDRGFVLIPTAEVPLTNYYRGEILDGSELPIKFTAMSPSFRSEAGSAGRDTRGLIRLHQFHKVEMVKFAKPDQSYDELEKMTANAENILQKLGLAYRVVALSTGDMGFSAAKTYDLEVWIPAQNTYREISSCSNCEDFQARRAQIRYRDEDGKVQLLHTLNGSGLAVGRTVAAILENYQNEDGSITVPEILRPYMGGLEVIK.

L-serine is bound at residue Thr231–Glu233. An ATP-binding site is contributed by Arg262–Glu264. Glu285 contributes to the L-serine binding site. An ATP-binding site is contributed by Glu349–Ser352. Ser384 contributes to the L-serine binding site.

Belongs to the class-II aminoacyl-tRNA synthetase family. Type-1 seryl-tRNA synthetase subfamily. Homodimer. The tRNA molecule binds across the dimer.

Its subcellular location is the cytoplasm. The catalysed reaction is tRNA(Ser) + L-serine + ATP = L-seryl-tRNA(Ser) + AMP + diphosphate + H(+). It carries out the reaction tRNA(Sec) + L-serine + ATP = L-seryl-tRNA(Sec) + AMP + diphosphate + H(+). Its pathway is aminoacyl-tRNA biosynthesis; selenocysteinyl-tRNA(Sec) biosynthesis; L-seryl-tRNA(Sec) from L-serine and tRNA(Sec): step 1/1. Its function is as follows. Catalyzes the attachment of serine to tRNA(Ser). Is also able to aminoacylate tRNA(Sec) with serine, to form the misacylated tRNA L-seryl-tRNA(Sec), which will be further converted into selenocysteinyl-tRNA(Sec). This is Serine--tRNA ligase from Lactococcus lactis subsp. cremoris (strain SK11).